A 190-amino-acid chain; its full sequence is Elongation factor P (190 aa).

It belongs to the elongation factor P family.

Its subcellular location is the cytoplasm. It participates in protein biosynthesis; polypeptide chain elongation. Functionally, involved in peptide bond synthesis. Stimulates efficient translation and peptide-bond synthesis on native or reconstituted 70S ribosomes in vitro. Probably functions indirectly by altering the affinity of the ribosome for aminoacyl-tRNA, thus increasing their reactivity as acceptors for peptidyl transferase. This chain is Elongation factor P, found in Pseudomonas fluorescens (strain SBW25).